A 157-amino-acid polypeptide reads, in one-letter code: MAKKSHQENNDNLIAQNKKARHDYFVTDTVEAGLVLTGTEIKSVRAHRVNLKDGFAQVRNGEAWLMNVHISEYDNGTYFNQDPLRNRKLLLHKKEINKLVGALQDKGVTLIPLKMYIKHGYAKVLLGLAKGKHQYDKREAIKRREQNREIERVMKHY.

The protein belongs to the SmpB family.

The protein localises to the cytoplasm. In terms of biological role, required for rescue of stalled ribosomes mediated by trans-translation. Binds to transfer-messenger RNA (tmRNA), required for stable association of tmRNA with ribosomes. tmRNA and SmpB together mimic tRNA shape, replacing the anticodon stem-loop with SmpB. tmRNA is encoded by the ssrA gene; the 2 termini fold to resemble tRNA(Ala) and it encodes a 'tag peptide', a short internal open reading frame. During trans-translation Ala-aminoacylated tmRNA acts like a tRNA, entering the A-site of stalled ribosomes, displacing the stalled mRNA. The ribosome then switches to translate the ORF on the tmRNA; the nascent peptide is terminated with the 'tag peptide' encoded by the tmRNA and targeted for degradation. The ribosome is freed to recommence translation, which seems to be the essential function of trans-translation. This chain is SsrA-binding protein, found in Limosilactobacillus reuteri (strain DSM 20016) (Lactobacillus reuteri).